The sequence spans 175 residues: ATP synthase subunit delta (175 aa).

The protein belongs to the ATPase delta chain family. F-type ATPases have 2 components, F(1) - the catalytic core - and F(0) - the membrane proton channel. F(1) has five subunits: alpha(3), beta(3), gamma(1), delta(1), epsilon(1). F(0) has three main subunits: a(1), b(2) and c(10-14). The alpha and beta chains form an alternating ring which encloses part of the gamma chain. F(1) is attached to F(0) by a central stalk formed by the gamma and epsilon chains, while a peripheral stalk is formed by the delta and b chains.

It is found in the cell inner membrane. F(1)F(0) ATP synthase produces ATP from ADP in the presence of a proton or sodium gradient. F-type ATPases consist of two structural domains, F(1) containing the extramembraneous catalytic core and F(0) containing the membrane proton channel, linked together by a central stalk and a peripheral stalk. During catalysis, ATP synthesis in the catalytic domain of F(1) is coupled via a rotary mechanism of the central stalk subunits to proton translocation. In terms of biological role, this protein is part of the stalk that links CF(0) to CF(1). It either transmits conformational changes from CF(0) to CF(1) or is implicated in proton conduction. The polypeptide is ATP synthase subunit delta (Sulfurovum sp. (strain NBC37-1)).